Reading from the N-terminus, the 240-residue chain is Diglucosylglycerate octanoyltransferase (240 aa).

Belongs to the OctT acyltransferase family. In terms of assembly, homotetramer.

It catalyses the reaction (2R)-2-O-[alpha-D-glucopyranosyl-(1-&gt;6)-alpha-D-glucopyranosyl]-glycerate + octanoyl-CoA = (2R)-2-O-[6-O-octanoyl-alpha-D-glucopyranosyl-(1-&gt;6)-alpha-D-glucopyranosyl]-glycerate + CoA. Functionally, sugar octanoyltransferase likely involved in the biosynthesis of mycobacterial methylglucose lipopolysaccharide (MGLP). Catalyzes the transfer of an octanoyl group from octanoyl-CoA to the C6 OH of the second glucose in diglucosylglycerate (DGG). Can also use hexanoyl-CoA as acyl donor in vitro. DGG is the preferred acceptor, but to a lesser extent, GG (glucosylglycerate) can be used as substrate. DGG and GG are the two earliest intermediates in MGLP biosynthesis. In Mycolicibacterium hassiacum (strain DSM 44199 / CIP 105218 / JCM 12690 / 3849) (Mycobacterium hassiacum), this protein is Diglucosylglycerate octanoyltransferase.